We begin with the raw amino-acid sequence, 140 residues long: Nucleoside diphosphate kinase (140 aa).

ATP-binding residues include Lys-11, Phe-59, Arg-87, Thr-93, Arg-104, and Asn-114. Residue His-117 is the Pros-phosphohistidine intermediate of the active site.

This sequence belongs to the NDK family. Homotetramer. Mg(2+) is required as a cofactor.

Its subcellular location is the cytoplasm. The catalysed reaction is a 2'-deoxyribonucleoside 5'-diphosphate + ATP = a 2'-deoxyribonucleoside 5'-triphosphate + ADP. The enzyme catalyses a ribonucleoside 5'-diphosphate + ATP = a ribonucleoside 5'-triphosphate + ADP. Functionally, major role in the synthesis of nucleoside triphosphates other than ATP. The ATP gamma phosphate is transferred to the NDP beta phosphate via a ping-pong mechanism, using a phosphorylated active-site intermediate. This is Nucleoside diphosphate kinase from Rhizobium etli (strain CIAT 652).